A 211-amino-acid polypeptide reads, in one-letter code: Dual specificity protein phosphatase 26 (211 aa).

In terms of domain architecture, Tyrosine-protein phosphatase spans Asn-60 to Gln-207. Cys-152 acts as the Phosphocysteine intermediate in catalysis.

Belongs to the protein-tyrosine phosphatase family. Non-receptor class dual specificity subfamily. As to quaternary structure, interacts with HSF4. Brain. In the brain it is expressed ubiquitously except in the hippocampus. Expressed in embryonal cancers (retinoblastoma, neuroepithilioma and neuroblastoma) and in anaplatic thyroid cancer.

It localises to the cytoplasm. The protein localises to the nucleus. The protein resides in the golgi apparatus. It carries out the reaction O-phospho-L-tyrosyl-[protein] + H2O = L-tyrosyl-[protein] + phosphate. The enzyme catalyses O-phospho-L-seryl-[protein] + H2O = L-seryl-[protein] + phosphate. It catalyses the reaction O-phospho-L-threonyl-[protein] + H2O = L-threonyl-[protein] + phosphate. Its function is as follows. Inactivates MAPK1 and MAPK3 which leads to dephosphorylation of heat shock factor protein 4 and a reduction in its DNA-binding activity. Inhibits MAP kinase p38 by dephosphorylating it and inhibits p38-mediated apoptosis in anaplastic thyroid cancer cells. Can also induce activation of MAP kinase p38 and c-Jun N-terminal kinase (JNK). In Homo sapiens (Human), this protein is Dual specificity protein phosphatase 26 (DUSP26).